The following is a 937-amino-acid chain: Putative diacylglycerol kinase K06A1.6 (937 aa).

Disordered stretches follow at residues 44-69 (PPRKKWFRSKQQLSGAADGMDGSSRA) and 106-145 (SNDSNEEHENVSVSSESSWSSASDSESDEDSATGRDSTNN). Over residues 116 to 129 (VSVSSESSWSSASD) the composition is skewed to low complexity. The region spanning 414-551 (GPSQPLLVFV…LDRWRIDVEP (138 aa)) is the DAGKc domain.

It belongs to the eukaryotic diacylglycerol kinase family.

The enzyme catalyses a 1,2-diacyl-sn-glycerol + ATP = a 1,2-diacyl-sn-glycero-3-phosphate + ADP + H(+). The chain is Putative diacylglycerol kinase K06A1.6 (dgk-5) from Caenorhabditis elegans.